The primary structure comprises 625 residues: Putative xanthine/uracil permease C887.17 (625 aa).

10 helical membrane passes run 49 to 69 (AGLT…TILV), 107 to 127 (AAIS…PVGM), 154 to 174 (EALL…VIGL), 192 to 212 (AGIG…LGVI), 246 to 263 (MWVG…LMMY), 328 to 348 (FAIA…GTLY), 369 to 389 (VAYI…CSPV), 406 to 426 (GILG…APIF), 429 to 449 (IPVW…MKST), and 465 to 485 (ITIA…AGII). Residues 595-625 (EAVGESESFSNRQQDFRTPYAGIDMDTDDRI) are disordered.

This sequence belongs to the nucleobase:cation symporter-2 (NCS2) (TC 2.A.40) family. Azg-like subfamily.

The protein localises to the golgi apparatus membrane. The protein is Putative xanthine/uracil permease C887.17 of Schizosaccharomyces pombe (strain 972 / ATCC 24843) (Fission yeast).